The sequence spans 62 residues: DNA gyrase inhibitor YacG (62 aa).

Zn(2+) contacts are provided by Cys9, Cys12, Cys27, and Cys31. Residues 43–52 (GYRIPGEKAP) are compositionally biased toward basic and acidic residues. The tract at residues 43–62 (GYRIPGEKAPESGGEEPGDE) is disordered.

Belongs to the DNA gyrase inhibitor YacG family. In terms of assembly, interacts with GyrB. Zn(2+) serves as cofactor.

Functionally, inhibits all the catalytic activities of DNA gyrase by preventing its interaction with DNA. Acts by binding directly to the C-terminal domain of GyrB, which probably disrupts DNA binding by the gyrase. The chain is DNA gyrase inhibitor YacG from Geobacter sp. (strain M21).